The chain runs to 258 residues: Indole-3-glycerol phosphate synthase (258 aa).

Belongs to the TrpC family.

It catalyses the reaction 1-(2-carboxyphenylamino)-1-deoxy-D-ribulose 5-phosphate + H(+) = (1S,2R)-1-C-(indol-3-yl)glycerol 3-phosphate + CO2 + H2O. The protein operates within amino-acid biosynthesis; L-tryptophan biosynthesis; L-tryptophan from chorismate: step 4/5. The polypeptide is Indole-3-glycerol phosphate synthase (Chlorobium limicola (strain DSM 245 / NBRC 103803 / 6330)).